A 277-amino-acid polypeptide reads, in one-letter code: Large ribosomal subunit protein uL2 (277 aa).

2 disordered regions span residues 35–57 (RPLH…QGGG) and 222–277 (GVAM…NRRR). Composition is skewed to basic residues over residues 37–57 (LHSK…QGGG) and 268–277 (VRRRKQNRRR).

It belongs to the universal ribosomal protein uL2 family. As to quaternary structure, part of the 50S ribosomal subunit. Forms a bridge to the 30S subunit in the 70S ribosome.

Functionally, one of the primary rRNA binding proteins. Required for association of the 30S and 50S subunits to form the 70S ribosome, for tRNA binding and peptide bond formation. It has been suggested to have peptidyltransferase activity; this is somewhat controversial. Makes several contacts with the 16S rRNA in the 70S ribosome. This is Large ribosomal subunit protein uL2 from Frankia casuarinae (strain DSM 45818 / CECT 9043 / HFP020203 / CcI3).